A 408-amino-acid chain; its full sequence is Chaperonin GroEL (408 aa).

ATP contacts are provided by residues 30–33, K51, and 87–91; these read TLGP and DGTTT.

Belongs to the chaperonin (HSP60) family. In terms of assembly, forms a cylinder of 14 subunits composed of two heptameric rings stacked back-to-back. Interacts with the co-chaperonin GroES.

It localises to the cytoplasm. The enzyme catalyses ATP + H2O + a folded polypeptide = ADP + phosphate + an unfolded polypeptide.. Together with its co-chaperonin GroES, plays an essential role in assisting protein folding. The GroEL-GroES system forms a nano-cage that allows encapsulation of the non-native substrate proteins and provides a physical environment optimized to promote and accelerate protein folding. This chain is Chaperonin GroEL, found in Rickettsia rickettsii.